The sequence spans 80 residues: Putative membrane protein insertion efficiency factor (80 aa).

The protein belongs to the UPF0161 family.

It is found in the cell inner membrane. Could be involved in insertion of integral membrane proteins into the membrane. This is Putative membrane protein insertion efficiency factor from Picosynechococcus sp. (strain ATCC 27264 / PCC 7002 / PR-6) (Agmenellum quadruplicatum).